The sequence spans 89 residues: Small ribosomal subunit protein bS20 (89 aa).

It belongs to the bacterial ribosomal protein bS20 family.

Binds directly to 16S ribosomal RNA. In Sulfurovum sp. (strain NBC37-1), this protein is Small ribosomal subunit protein bS20.